The primary structure comprises 1369 residues: Serine/threonine-protein kinase SIK3 (1369 aa).

Residues 26-55 (LLPPPAAGPPAAPAAVPPAAVPARPTAPAS) are disordered. The segment covering 27 to 45 (LPPPAAGPPAAPAAVPPAA) has biased composition (pro residues). Over residues 46–55 (VPARPTAPAS) the composition is skewed to low complexity. The 252-residue stretch at 66-317 (YEIDRTIGKG…MEQICRHKWM (252 aa)) folds into the Protein kinase domain. At Thr71 the chain carries Phosphothreonine. Residues 72 to 80 (IGKGNFAVV) and Lys95 each bind ATP. Asp188 (proton acceptor) is an active-site residue. At Thr221 the chain carries Phosphothreonine. One can recognise a UBA domain in the interval 344–384 (PLNDDVLLAMEDMGLDKERTLQSLRSDAYDHYSAIYSLLCD). A Phosphothreonine modification is found at Thr469. Phosphoserine occurs at positions 551, 591, 592, 674, and 695. A disordered region spans residues 775–821 (IQPSSPPPNHPSNHLFRQPSNSPPPVSSAMITSHGATSPSQFQGLPS). Polar residues predominate over residues 803-818 (AMITSHGATSPSQFQG). Ser914 carries the post-translational modification Phosphoserine. The tract at residues 942 to 993 (LFSDQSRGSPSSYSPSTGVGFPPTQALKVPPLDQFPTFPPSAQQQPPHYTTS) is disordered. The segment covering 944-957 (SDQSRGSPSSYSPS) has biased composition (low complexity). Residues 981 to 993 (PSAQQQPPHYTTS) are compositionally biased toward polar residues. The residue at position 1026 (Ser1026) is a Phosphoserine. Arg1034 is subject to Omega-N-methylarginine. The segment at 1314-1338 (DEEDEECGVSLGHEHPGLGDGSQHL) is disordered.

Belongs to the protein kinase superfamily. CAMK Ser/Thr protein kinase family. SNF1 subfamily. In terms of assembly, binds to and is activated by YWHAZ when phosphorylated on Thr-221. Interacts with 14-3-3 proteins. Interacts with HDAC4; this interaction leads to HDAC4 retention in the cytoplasm. Interacts with DEPTOR, MLST8/GbetaL, RICTOR and RPTOR. The cofactor is Mg(2+). Phosphorylated at Thr-221 by STK11/LKB1 in complex with STE20-related adapter-alpha (STRADA) pseudo kinase and CAB39. Expressed in hypertrophic chondrocytes in the growth plate.

It localises to the cytoplasm. It catalyses the reaction L-seryl-[protein] + ATP = O-phospho-L-seryl-[protein] + ADP + H(+). The catalysed reaction is L-threonyl-[protein] + ATP = O-phospho-L-threonyl-[protein] + ADP + H(+). With respect to regulation, activated by phosphorylation on Thr-221. Functionally, positive regulator of mTOR signaling that functions by triggering the degradation of DEPTOR, an mTOR inhibitor. Required for chondrocyte hypertrophy during skeletogenesis. Negatively regulates cAMP signaling pathway possibly by acting on CRTC2/TORC2 and CRTC3/TORC3. Prevents HDAC4 translocation to the nucleus. The protein is Serine/threonine-protein kinase SIK3 (Sik3) of Mus musculus (Mouse).